A 227-amino-acid chain; its full sequence is Uracil-DNA glycosylase (227 aa).

D68 serves as the catalytic Proton acceptor.

It belongs to the uracil-DNA glycosylase (UDG) superfamily. UNG family.

The protein resides in the cytoplasm. It carries out the reaction Hydrolyzes single-stranded DNA or mismatched double-stranded DNA and polynucleotides, releasing free uracil.. Its function is as follows. Excises uracil residues from the DNA which can arise as a result of misincorporation of dUMP residues by DNA polymerase or due to deamination of cytosine. This chain is Uracil-DNA glycosylase, found in Mycobacterium leprae (strain Br4923).